A 71-amino-acid polypeptide reads, in one-letter code: Allergen Art v 2 (71 aa).

In terms of processing, glycosylated. High-mannose oligosaccharides (Man(5-9)GlcNAc(2)).

This Artemisia vulgaris (Mugwort) protein is Allergen Art v 2.